We begin with the raw amino-acid sequence, 262 residues long: Phosphatidylglycerol--prolipoprotein diacylglyceryl transferase (262 aa).

4 consecutive transmembrane segments (helical) span residues leucine 9–valine 29, isoleucine 41–alanine 61, isoleucine 80–valine 100, and leucine 109–leucine 129. Arginine 131 is an a 1,2-diacyl-sn-glycero-3-phospho-(1'-sn-glycerol) binding site. 3 helical membrane-spanning segments follow: residues glutamine 167–phenylalanine 187, glycine 197–methionine 217, and glycine 226–isoleucine 246.

Belongs to the Lgt family.

Its subcellular location is the cell membrane. The enzyme catalyses L-cysteinyl-[prolipoprotein] + a 1,2-diacyl-sn-glycero-3-phospho-(1'-sn-glycerol) = an S-1,2-diacyl-sn-glyceryl-L-cysteinyl-[prolipoprotein] + sn-glycerol 1-phosphate + H(+). It participates in protein modification; lipoprotein biosynthesis (diacylglyceryl transfer). In terms of biological role, catalyzes the transfer of the diacylglyceryl group from phosphatidylglycerol to the sulfhydryl group of the N-terminal cysteine of a prolipoprotein, the first step in the formation of mature lipoproteins. The polypeptide is Phosphatidylglycerol--prolipoprotein diacylglyceryl transferase (Streptococcus pneumoniae (strain P1031)).